A 266-amino-acid chain; its full sequence is Glucosamine-6-phosphate deaminase (266 aa).

Asp-72 acts as the Proton acceptor; for enolization step in catalysis. Residue Asp-141 is the For ring-opening step of the active site. Catalysis depends on His-143, which acts as the Proton acceptor; for ring-opening step. The For ring-opening step role is filled by Glu-148.

It belongs to the glucosamine/galactosamine-6-phosphate isomerase family. NagB subfamily. As to quaternary structure, homohexamer.

It catalyses the reaction alpha-D-glucosamine 6-phosphate + H2O = beta-D-fructose 6-phosphate + NH4(+). It participates in amino-sugar metabolism; N-acetylneuraminate degradation; D-fructose 6-phosphate from N-acetylneuraminate: step 5/5. Its activity is regulated as follows. Allosterically activated by N-acetylglucosamine 6-phosphate (GlcNAc6P). In terms of biological role, catalyzes the reversible isomerization-deamination of glucosamine 6-phosphate (GlcN6P) to form fructose 6-phosphate (Fru6P) and ammonium ion. The polypeptide is Glucosamine-6-phosphate deaminase (Yersinia pseudotuberculosis serotype O:1b (strain IP 31758)).